The chain runs to 219 residues: MASFISFLLLAALIGMASWQAIAAEPSPLQDFCVADLNSAVRVNGFACKNPTNVSADDFFKAAMLDKPRDTAVNKVGSNITLINVMEIPGLNTLGISIVRVDYAPLGLNPPHTHPRATEIFTVLEGTLYVGFVTSNPDNKLFSKVLNKGDVFVFPKGLIHFQFNLDPHKPAIATSAISSQNPGIITIANAVFRSNPPISDDILAKAFQVDKKIIDLLQA.

The signal sequence occupies residues 1–23 (MASFISFLLLAALIGMASWQAIA). Cysteines 33 and 48 form a disulfide. N53 and N79 each carry an N-linked (GlcNAc...) asparagine glycan. The Cupin type-1 domain maps to 63-215 (AMLDKPRDTA…AFQVDKKIID (153 aa)). H112, H114, E119, and H160 together coordinate Mn(2+).

This sequence belongs to the germin family. Oligomer (believed to be a pentamer but probably hexamer).

It is found in the secreted. The protein resides in the extracellular space. The protein localises to the apoplast. Functionally, plays a role in broad-spectrum disease resistance. Probably has no oxalate oxidase activity even if the active site is conserved. The chain is Putative germin-like protein 8-1 from Oryza sativa subsp. japonica (Rice).